Here is a 187-residue protein sequence, read N- to C-terminus: MKNCMMADQRGRSILKHQPVVGDEALEFSRGLAPSTFGFRYAAYMDRNHFLPSGRTAVKHIADPTLAYVMTRYRQCHDFVHIITGCGRSIEEELAVKIFEWKHTGLPLGLLSLLGGAPRLAAAQWAHMRLYWEWASRNAPCSRHGEPAVPMYLNVPWEDMLAKEYDEVVAYTGITPLPQFLEKRQQH.

4 residues coordinate Zn(2+): histidine 77, aspartate 78, histidine 81, and glutamate 93.

It belongs to the COQ4 family. In terms of assembly, component of a multi-subunit COQ enzyme complex. It depends on Zn(2+) as a cofactor.

It is found in the mitochondrion inner membrane. The enzyme catalyses a 4-hydroxy-3-methoxy-5-(all-trans-polyprenyl)benzoate + H(+) = a 2-methoxy-6-(all-trans-polyprenyl)phenol + CO2. It participates in cofactor biosynthesis; ubiquinone biosynthesis. Lyase that catalyzes the C1-decarboxylation of 4-hydroxy-3-methoxy-5-(all-trans-polyprenyl)benzoic acid into 2-methoxy-6-(all-trans-polyprenyl)phenol during ubiquinone biosynthesis. This is Ubiquinone biosynthesis protein COQ4 homolog, mitochondrial from Leishmania infantum.